Reading from the N-terminus, the 247-residue chain is Probable transcriptional regulatory protein lpl1249 (247 aa).

This sequence belongs to the TACO1 family.

It localises to the cytoplasm. In Legionella pneumophila (strain Lens), this protein is Probable transcriptional regulatory protein lpl1249.